Consider the following 255-residue polypeptide: Imidazole glycerol phosphate synthase subunit HisF (255 aa).

Active-site residues include aspartate 12 and aspartate 131.

This sequence belongs to the HisA/HisF family. In terms of assembly, heterodimer of HisH and HisF.

The protein resides in the cytoplasm. It catalyses the reaction 5-[(5-phospho-1-deoxy-D-ribulos-1-ylimino)methylamino]-1-(5-phospho-beta-D-ribosyl)imidazole-4-carboxamide + L-glutamine = D-erythro-1-(imidazol-4-yl)glycerol 3-phosphate + 5-amino-1-(5-phospho-beta-D-ribosyl)imidazole-4-carboxamide + L-glutamate + H(+). The protein operates within amino-acid biosynthesis; L-histidine biosynthesis; L-histidine from 5-phospho-alpha-D-ribose 1-diphosphate: step 5/9. Functionally, IGPS catalyzes the conversion of PRFAR and glutamine to IGP, AICAR and glutamate. The HisF subunit catalyzes the cyclization activity that produces IGP and AICAR from PRFAR using the ammonia provided by the HisH subunit. This is Imidazole glycerol phosphate synthase subunit HisF from Sphingopyxis alaskensis (strain DSM 13593 / LMG 18877 / RB2256) (Sphingomonas alaskensis).